Reading from the N-terminus, the 446-residue chain is Protein adenylyltransferase FICD (446 aa).

Over 1–18 the chain is Cytoplasmic; it reads MAVTECEWASLGSRIGLR. A helical; Signal-anchor for type II membrane protein membrane pass occupies residues 19 to 39; the sequence is AALVLLSGSLLVVLFPLSGLE. The Lumenal portion of the chain corresponds to 40–446; that stretch reads HQYRTALNIL…ECKQTITIKT (407 aa). 2 TPR repeats span residues 94–127 and 128–161; these read AKAALNQALEMKRQGKKEKAHKLLHHALKMDPDH and VDALNELGILLEEEKDIIQADYLYSKALTISPHN. Positions 218–223 match the Inhibitory (S/T)XXXE(G/N) motif motif; the sequence is TVAIEG. E222 contributes to the ATP binding site. The N-linked (GlcNAc...) asparagine glycan is linked to N263. Residues 273-408 form the Fido domain; the sequence is VTIDNILEIH…VRPFIRFIAK (136 aa). ATP is bound at residue 304–307; sequence VGHH. H351 is an active-site residue. Residues 355-362, 387-388, and N395 each bind ATP; these read DGNGRTSR and YY.

The protein belongs to the fic family. In terms of assembly, homodimer. It depends on Mg(2+) as a cofactor. The cofactor is Mn(2+).

The protein resides in the endoplasmic reticulum membrane. It carries out the reaction L-tyrosyl-[protein] + ATP = O-(5'-adenylyl)-L-tyrosyl-[protein] + diphosphate. The catalysed reaction is 3-O-(5'-adenylyl)-L-threonyl-[protein] + H2O = L-threonyl-[protein] + AMP + H(+). It catalyses the reaction L-threonyl-[protein] + ATP = 3-O-(5'-adenylyl)-L-threonyl-[protein] + diphosphate. Its activity is regulated as follows. The side chain of Glu-222 determines which of the two opposing activities (AMPylase or de-AMPylase) will take place. In response to endoplasmic reticulum stress, mediates de-AMPylase activity. Adenylyltransferase activity is inhibited by the inhibitory helix present at the N-terminus: Glu-222 binds ATP and competes with ATP-binding at Arg-362, thereby preventing adenylyltransferase activity. In unstressed cells, disengagement of Glu-222 promotes adenylyltransferase activity. Activation dissociates ATP-binding from Glu-222, allowing ordered binding of the entire ATP moiety with the alpha-phosphate in an orientation that is productive for accepting an incoming target hydroxyl side chain. Its function is as follows. Protein that can both mediate the addition of adenosine 5'-monophosphate (AMP) to specific residues of target proteins (AMPylation), and the removal of the same modification from target proteins (de-AMPylation), depending on the context. The side chain of Glu-222 determines which of the two opposing activities (AMPylase or de-AMPylase) will take place. Acts as a key regulator of the ERN1/IRE1-mediated unfolded protein response (UPR) by mediating AMPylation or de-AMPylation of HSPA5/BiP. In unstressed cells, acts as an adenylyltransferase by mediating AMPylation of HSPA5/BiP at 'Thr-518', thereby inactivating it. In response to endoplasmic reticulum stress, acts as a phosphodiesterase by mediating removal of ATP (de-AMPylation) from HSPA5/BiP at 'Thr-518', leading to restore HSPA5/BiP activity. The chain is Protein adenylyltransferase FICD from Xenopus tropicalis (Western clawed frog).